Consider the following 114-residue polypeptide: Protein 4 (114 aa).

This is Protein 4 (4) from Hordeum vulgare (Barley).